Consider the following 149-residue polypeptide: Low molecular weight protein-tyrosine-phosphatase Wzb (149 aa).

Cys-9 functions as the Nucleophile in the catalytic mechanism. Arg-15 is a catalytic residue. Catalysis depends on Asp-115, which acts as the Proton donor.

It belongs to the low molecular weight phosphotyrosine protein phosphatase family.

The catalysed reaction is O-phospho-L-tyrosyl-[protein] + H2O = L-tyrosyl-[protein] + phosphate. It participates in glycan metabolism; exopolysaccharide biosynthesis. Its function is as follows. Dephosphorylates Wzc. Required for the extracellular polysaccharide colanic acid synthesis. Probably involved in the export of colanic acid from the cell to medium. Involved in protection of cells against contact-dependent growth inhibition (CDI). The chain is Low molecular weight protein-tyrosine-phosphatase Wzb (wzb) from Salmonella typhi.